A 464-amino-acid chain; its full sequence is MILISQAYVFNKIWEIKTKNKSYLKCLLKYWTSHLWIKKNFQSFLSNQGIVGSLELQNFKEENWKEWLKGFNRYNFSSKEWYKITPQQWRNKVSEHWKNQENKKLNPNQQISKNNFFINTSILEQTKKRNKIFKQNLLTYSCFDFTKNLAIRNFLNLNRKKIYNNIIINKIQKSYFIYNKKAKYLDFFSQKQNIFFEYNLLLWLIPEFIEEKNQYQNKRILILKNSIIKENNKKIIQNQKLFRKRELNQSIRQWRWKSKSLEKKFKKLGNMASLMTFMQNQENIISLSSKMREDLKLFHLFFRRNTTINQLTINSEHRLARLLDDQILMYKMVSTFLNIKYRFKRLSNLDNFDDFLGIQFFENKEKNNFFFFNSFNLEDILLPKRRRKFRILNSLTSKNKKNTQLNQKFVQKKFSKTKIKKIKRFIWASYRFEDLACMNRFWFNTINGSRFSMLRFRMYPSLLT.

The protein belongs to the TIC214 family. As to quaternary structure, part of the Tic complex.

It localises to the plastid. Its subcellular location is the chloroplast. In terms of biological role, involved in protein precursor import into chloroplasts. May be part of an intermediate translocation complex acting as a protein-conducting channel at the inner envelope. This chain is Putative protein TIC 214 C-terminal part, found in Marchantia polymorpha (Common liverwort).